Reading from the N-terminus, the 128-residue chain is Early 4 ORF1 protein (128 aa).

The Cytoplasmic portion of the chain corresponds to 1 to 26 (MAAAVEALYVVLEREGAILPRQEGFS). A helical membrane pass occupies residues 27 to 47 (GVYVFFSPINFVIPPMGAVML). At 48 to 99 (SLRLRVCIPPGYFGRFLALTDVNQPDVFTESYIMTPDMTEELSVVLFNHGDQ) the chain is on the extracellular side. A helical transmembrane segment spans residues 100 to 120 (FFYGHAGMAVVRLMLIRVVFP). Residues 121 to 128 (VVRQASNV) are Cytoplasmic-facing. The short motif at 125–128 (ASNV) is the PBZ domain binding motif element.

This sequence belongs to the adenoviridae E4-ORF1 family. As to quaternary structure, may interact with host PDZ proteins through the PDZ domain binding motif (PBM), namely host DLG1, PATJ and TJP2.

It localises to the host membrane. Its function is as follows. May modulate tight-junctions functions of infected cells through interactions with PDZ proteins. E4 ORF1 has ben show for Adenovirus 9 to interact with protein involved in tight junction regulation. May play a role in mTOR activation by activating PI3-kinase, thus overriding cellular checkpoint for translation. This Human adenovirus C serotype 2 (HAdV-2) protein is Early 4 ORF1 protein.